The following is an 828-amino-acid chain: DNA gyrase subunit A (828 aa).

The Topo IIA-type catalytic domain maps to 32–497 (LPDVRDGLKP…EVLSLEDEDL (466 aa)). Tyrosine 120 serves as the catalytic O-(5'-phospho-DNA)-tyrosine intermediate. Residues 524–530 (QKRGGRG) carry the GyrA-box motif.

This sequence belongs to the type II topoisomerase GyrA/ParC subunit family. In terms of assembly, heterotetramer, composed of two GyrA and two GyrB chains. In the heterotetramer, GyrA contains the active site tyrosine that forms a transient covalent intermediate with DNA, while GyrB binds cofactors and catalyzes ATP hydrolysis.

The protein resides in the cytoplasm. It carries out the reaction ATP-dependent breakage, passage and rejoining of double-stranded DNA.. Its function is as follows. A type II topoisomerase that negatively supercoils closed circular double-stranded (ds) DNA in an ATP-dependent manner to modulate DNA topology and maintain chromosomes in an underwound state. Negative supercoiling favors strand separation, and DNA replication, transcription, recombination and repair, all of which involve strand separation. Also able to catalyze the interconversion of other topological isomers of dsDNA rings, including catenanes and knotted rings. Type II topoisomerases break and join 2 DNA strands simultaneously in an ATP-dependent manner. This is DNA gyrase subunit A from Streptococcus pyogenes serotype M6 (strain ATCC BAA-946 / MGAS10394).